The chain runs to 569 residues: Arylsulfatase I (569 aa).

A signal peptide spans 1 to 23; sequence MHTLTGFSLVSLLSFGYLSWDWA. Residues aspartate 55, aspartate 56, and cysteine 93 each contribute to the Ca(2+) site. The active-site Nucleophile is the cysteine 93. Cysteine 93 is subject to 3-oxoalanine (Cys). Lysine 147 is a binding site for substrate. Residue histidine 149 is part of the active site. Residue histidine 239 coordinates substrate. Asparagine 276 and asparagine 288 each carry an N-linked (GlcNAc...) asparagine glycan. Residues aspartate 297 and asparagine 298 each contribute to the Ca(2+) site. Residue lysine 315 coordinates substrate. N-linked (GlcNAc...) asparagine glycosylation is found at asparagine 466 and asparagine 496. The segment at 510–539 is disordered; that stretch reads RAHPDFNGGAWGPWASDEEEEEEEGRARSF.

It belongs to the sulfatase family. Requires Ca(2+) as cofactor. In terms of processing, the oxidation of Cys-93 residue to 3-oxoalanine (also known as C(alpha)-formylglycine) by SUMF1/Sulfatase-modifying factor 1, seems critical for catalytic activity. In terms of tissue distribution, expressed in placenta, in embryonic stem cells, fetal eyes and lens.

It localises to the secreted. Its subcellular location is the endoplasmic reticulum. In terms of biological role, displays arylsulfatase activity at neutral pH, when co-expressed with SUMF1; arylsulfatase activity is measured in the secretion medium of retinal cell line, but no activity is recorded when measured in cell extracts. Lacks arylsulfatase activity. The protein is Arylsulfatase I (ARSI) of Homo sapiens (Human).